A 603-amino-acid chain; its full sequence is MALSFFSGGGSASHAKYFDIRLDEDYIVFRGGEQEAASAHLSGKLLLCLSEPLSIKHIRLHLTGISRVCWHLPSSSAGGGRKSWRERVIYEKTWRFRDPGKGKTEILPAGNYEYPFNLVLEGNMPESIEGLSDTYITYRFKAEIGRKYAKDIIVRKPLRIIRTLEPSALELAHAMSVENIWPNKIEYSISTPTKAVIFGTSIRVDFKLIPLLKGLTIGQIVSQLIESHDLTLNPEDPDSIRNTYKNTRTILNDEFELDHDNALEIIDEAAEGYQFSRYLDLPKTLTRCLQDTDTKGIKVRHKLKFRVQLMNPDGHISELRATLPVSIFISPNLAIDENNNLVDQTPQSAQRAINDIAQQAPPLYGEHQFDQLYSELDPNGYRTPGPGSGPGTPFGTLSRNLSAENLASMNALTNTDISASALHSRLSNLSNLNITRPHQPSPTDHESQNDSEHRRLGVPADYFGPSSGSNSHSPSSPVLSRRPSDEVDHEHVPSGMATPFHPQYAEVETLSRVPSYSTAVRTTVRPHDSDLPDYDAVVAEDIPVPPPLQSPQQAHIRNAGRGSSQLFSSLDILHHRPGLGHSHSSSHDDEDRRLRLVQARARV.

Disordered stretches follow at residues 375–398 and 432–499; these read ELDP…GTLS and LNIT…MATP. Positions 443–455 are enriched in basic and acidic residues; it reads TDHESQNDSEHRR. The segment covering 465 to 481 has biased composition (low complexity); it reads PSSGSNSHSPSSPVLSR. The segment covering 482–492 has biased composition (basic and acidic residues); that stretch reads RPSDEVDHEHV.

It belongs to the arrestin family. In terms of assembly, interacts with hulA.

Its function is as follows. Component of the regulatory network controlling carbon source utilization through ubiquitination and deubiquitination involving creA, creB, creC, creD and acrB. May be involved in signaling by recognizing appropriately phosphorylated substrates via its arrestin domains and then recruit a HECT-type ubiquitin ligase such as hulA, leading to ubiquitination of the substrate, providing a link between ubiquitination and phosphorylation in protein regulation and stability. This is Probable HECT-type ubiquitin ligase-interacting protein creD (creD) from Aspergillus flavus (strain ATCC 200026 / FGSC A1120 / IAM 13836 / NRRL 3357 / JCM 12722 / SRRC 167).